A 434-amino-acid chain; its full sequence is Histidine--tRNA ligase (434 aa).

The protein belongs to the class-II aminoacyl-tRNA synthetase family. Homodimer.

It localises to the cytoplasm. It carries out the reaction tRNA(His) + L-histidine + ATP = L-histidyl-tRNA(His) + AMP + diphosphate + H(+). This chain is Histidine--tRNA ligase, found in Chlorobium phaeobacteroides (strain BS1).